The following is a 178-amino-acid chain: Caveolin-1 (178 aa).

N-acetylserine is present on Ser2. Ser2 carries the phosphoserine modification. The interval 2-94 (SGGKYVDSEG…WKASFTTFTV (93 aa)) is required for homooligomerization. Residues 2 to 104 (SGGKYVDSEG…TKYWFYRLLS (103 aa)) are Cytoplasmic-facing. Residue Lys5 is modified to N6-acetyllysine; alternate. Residue Lys5 forms a Glycyl lysine isopeptide (Lys-Gly) (interchain with G-Cter in ubiquitin); alternate linkage. Tyr6 carries the phosphotyrosine modification. Position 9 is a phosphoserine (Ser9). Tyr14 is modified (phosphotyrosine; by ABL1). A Phosphotyrosine modification is found at Tyr25. Glycyl lysine isopeptide (Lys-Gly) (interchain with G-Cter in ubiquitin) cross-links involve residues Lys26, Lys39, Lys47, and Lys57. The tract at residues 82 to 94 (DGIWKASFTTFTV) is interaction with CAVIN3. An intramembrane region (helical) is located at residues 105–125 (ALFGIPMALIWGIYFAILSFL). The Cytoplasmic portion of the chain corresponds to 126–178 (HIWAVVPCIKSFLIEIQCISRVYSIYVHTFCDPLFEAIGKIFSSIRINMQKEI). The segment at 131 to 142 (VPCIKSFLIEIQ) is interacts with SPRY1, SPRY2, SPRY3 and SPRY4. 3 S-palmitoyl cysteine lipidation sites follow: Cys133, Cys143, and Cys156. The tract at residues 149 to 160 (SIYVHTFCDPLF) is interacts with SPRY1, SPRY2, and SPRY4. The tract at residues 167 to 178 (FSSIRINMQKEI) is interacts with SPRY1, SPRY2, SPRY3 and SPRY4.

It belongs to the caveolin family. In terms of assembly, homooligomer. Interacts with GLIPR2. Interacts with NOSTRIN. Interacts with SNAP25 and STX1A. Interacts (via the N-terminus) with DPP4; the interaction is direct. Interacts with CTNNB1, CDH1 and JUP. Interacts with PACSIN2; this interaction induces membrane tubulation. Interacts with SLC7A9. Interacts with BMX and BTK. Interacts with TGFBR1. Interacts with CAVIN3 (via leucine-zipper domain) in a cholesterol-sensitive manner. Interacts with CAVIN1. Interacts with EHD2 in a cholesterol-dependent manner. Forms a ternary complex with UBXN6 and VCP; mediates CAV1 targeting to lysosomes for degradation. Interacts with ABCG1; this interaction regulates ABCG1-mediated cholesterol efflux. Interacts with NEU3; this interaction enhances NEU3 sialidase activity within caveola. Interacts (via C-terminus) with SPRY1, SPRY2 (via C-terminus), SPRY3, and SPRY4. Interacts with IGFBP5; this interaction allows trafficking of IGFBP5 from the plasma membrane to the nucleus. Post-translationally, phosphorylated at Tyr-14 by ABL1 in response to oxidative stress. In terms of processing, ubiquitinated. Undergo monoubiquitination and multi- and/or polyubiquitination. Monoubiquitination of N-terminal lysines promotes integration in a ternary complex with UBXN6 and VCP which promotes oligomeric CAV1 targeting to lysosomes for degradation. Ubiquitinated by ZNRF1; leading to degradation and modulation of the TLR4-mediated immune response.

Its subcellular location is the golgi apparatus membrane. It is found in the cell membrane. The protein resides in the membrane. The protein localises to the caveola. It localises to the membrane raft. In terms of biological role, may act as a scaffolding protein within caveolar membranes. Forms a stable heterooligomeric complex with CAV2 that targets to lipid rafts and drives caveolae formation. Mediates the recruitment of CAVIN proteins (CAVIN1/2/3/4) to the caveolae. Interacts directly with G-protein alpha subunits and can functionally regulate their activity. Involved in the costimulatory signal essential for T-cell receptor (TCR)-mediated T-cell activation. Its binding to DPP4 induces T-cell proliferation and NF-kappa-B activation in a T-cell receptor/CD3-dependent manner. Recruits CTNNB1 to caveolar membranes and may regulate CTNNB1-mediated signaling through the Wnt pathway. Negatively regulates TGFB1-mediated activation of SMAD2/3 by mediating the internalization of TGFBR1 from membrane rafts leading to its subsequent degradation. Binds 20(S)-hydroxycholesterol (20(S)-OHC). The sequence is that of Caveolin-1 (CAV1) from Loxodonta africana (African elephant).